We begin with the raw amino-acid sequence, 185 residues long: Large ribosomal subunit protein bL25 (185 aa).

This sequence belongs to the bacterial ribosomal protein bL25 family. CTC subfamily. Part of the 50S ribosomal subunit; part of the 5S rRNA/L5/L18/L25 subcomplex. Contacts the 5S rRNA. Binds to the 5S rRNA independently of L5 and L18.

In terms of biological role, this is one of the proteins that binds to the 5S RNA in the ribosome where it forms part of the central protuberance. This chain is Large ribosomal subunit protein bL25, found in Chlamydia muridarum (strain MoPn / Nigg).